Consider the following 66-residue polypeptide: Large ribosomal subunit protein bL33c (66 aa).

It belongs to the bacterial ribosomal protein bL33 family.

The protein resides in the plastid. Its subcellular location is the chloroplast. This is Large ribosomal subunit protein bL33c from Aethionema cordifolium (Lebanon stonecress).